We begin with the raw amino-acid sequence, 244 residues long: rRNA adenine N-6-methyltransferase (244 aa).

S-adenosyl-L-methionine contacts are provided by N11, I13, G38, E59, D84, and S101.

This sequence belongs to the class I-like SAM-binding methyltransferase superfamily. rRNA adenine N(6)-methyltransferase family.

Involved in erythromycin resistance. This Lysinibacillus sphaericus (Bacillus sphaericus) protein is rRNA adenine N-6-methyltransferase (ermG).